Reading from the N-terminus, the 274-residue chain is Ribosomal RNA small subunit methyltransferase A (274 aa).

Positions 17, 19, 44, 65, 89, and 111 each coordinate S-adenosyl-L-methionine.

This sequence belongs to the class I-like SAM-binding methyltransferase superfamily. rRNA adenine N(6)-methyltransferase family. RsmA subfamily.

It localises to the cytoplasm. It carries out the reaction adenosine(1518)/adenosine(1519) in 16S rRNA + 4 S-adenosyl-L-methionine = N(6)-dimethyladenosine(1518)/N(6)-dimethyladenosine(1519) in 16S rRNA + 4 S-adenosyl-L-homocysteine + 4 H(+). Its function is as follows. Specifically dimethylates two adjacent adenosines (A1518 and A1519) in the loop of a conserved hairpin near the 3'-end of 16S rRNA in the 30S particle. May play a critical role in biogenesis of 30S subunits. The polypeptide is Ribosomal RNA small subunit methyltransferase A (Buchnera aphidicola subsp. Schizaphis graminum (strain Sg)).